The chain runs to 231 residues: 2-C-methyl-D-erythritol 4-phosphate cytidylyltransferase (231 aa).

It belongs to the IspD/TarI cytidylyltransferase family. IspD subfamily.

The catalysed reaction is 2-C-methyl-D-erythritol 4-phosphate + CTP + H(+) = 4-CDP-2-C-methyl-D-erythritol + diphosphate. It functions in the pathway isoprenoid biosynthesis; isopentenyl diphosphate biosynthesis via DXP pathway; isopentenyl diphosphate from 1-deoxy-D-xylulose 5-phosphate: step 2/6. In terms of biological role, catalyzes the formation of 4-diphosphocytidyl-2-C-methyl-D-erythritol from CTP and 2-C-methyl-D-erythritol 4-phosphate (MEP). The sequence is that of 2-C-methyl-D-erythritol 4-phosphate cytidylyltransferase from Shewanella piezotolerans (strain WP3 / JCM 13877).